Consider the following 363-residue polypeptide: uncharacterized protein (363 aa).

This sequence belongs to the TelA family.

This is an uncharacterized protein from Bacillus subtilis (strain 168).